The chain runs to 59 residues: MRFKIKKCPKCGEYTLKETCPLCGEKTKLAHPPKFSPEDPYGEYRRRLKKETLGIGVKK.

It belongs to the NOP10 family.

In terms of biological role, involved in ribosome biogenesis; more specifically in 18S rRNA pseudouridylation and in cleavage of pre-rRNA. This is Ribosome biogenesis protein Nop10 from Thermococcus sibiricus (strain DSM 12597 / MM 739).